Consider the following 66-residue polypeptide: VRDAYIAQNYNCVYDCARDAYCNELCTKNGAKSGHCEWFGPHGDACWCIDLPNNVPIKVEGKCHRK.

The LCN-type CS-alpha/beta domain maps to 2–64 (RDAYIAQNYN…VPIKVEGKCH (63 aa)). Disulfide bonds link cysteine 12–cysteine 63, cysteine 16–cysteine 36, cysteine 22–cysteine 46, and cysteine 26–cysteine 48.

The protein belongs to the long (4 C-C) scorpion toxin superfamily. Sodium channel inhibitor family. Alpha subfamily. As to expression, expressed by the venom gland.

It localises to the secreted. Functionally, alpha toxins bind voltage-independently at site-3 of sodium channels (Nav) and inhibit the inactivation of the activated channels, thereby blocking neuronal transmission. The polypeptide is Toxin Boma6b (Buthus occitanus mardochei (Moroccan scorpion)).